The following is a 103-amino-acid chain: MGSSPILLVLAISIGLASACFLNSCPYRRYGRTIRCSSCGIENEGVCISEGRCCTNEECFMSTECSYSAVCPELFCKIGHHPGYCMKKGYCCTQGGCQTSAMC.

The signal sequence occupies residues 1 to 19 (MGSSPILLVLAISIGLASA). C20 and C25 are joined by a disulfide. Residue Y30 is modified to Tyrosine amide. Residues 31–103 (GRTIRCSSCG…QGGCQTSAMC (73 aa)) constitute a propeptide that is removed on maturation.

This sequence belongs to the vasopressin/oxytocin family. As to expression, detected in thermosensory AFD neurons, neurosecretory NSM cells, AVK interneurons, pharyngeal neuron M5, and the mechanosensory DVA neuron. Detected in male-specific CP motor neurons.

It localises to the secreted. In terms of biological role, ligand for the G-protein coupled receptor ntr-1. Plays a role in gustatory associative learning. Also plays a role in male mating behavior. This Caenorhabditis elegans protein is Nematocin.